The primary structure comprises 568 residues: MSKISTKLKALSAVLSVTTLVAGCSTLPQNTDPQVLRSFSGSQSTQEIAGPTPNQDPDLLIRGFFSAGAYPTQQYEAAKAYLTEGTRSTWNPAASTRILDRIDLNTLPGSTNAERTIAIRGTQVGTLLSGGVYQPENAEFEAEITMRREDGEWRIDALPDGILLERNDLRNHYTPHDVYFFDPSGQVLVGDRRWLFNESQSMSTVLMALLVNGPSPAISPGVVNQLSTDASFVGFNDGEYQFTGLGNLDDDARLRFAAQAVWTLAHADVAGPYTLVADGAPLLSEFPTLTTDDLAEYNPEAYTNTVSTLFALQDGSLSRVSSGNVSPLQGIWSGGDIDSAAISSSANVVAAVRHESNEAVLTVGSMEGVTSDVLRSETITRPTFEYASSGLWAVVDGETPVRVARSATTGELVQTEAEIVLPRDVTGPISEFQLSRTGVRAAMIIEGKVYVGVVTRPGPGERRVTNITEVAPSLGEAALSINWRPDGILLVGTSIPETPLWRVEQDGSAISSTPSGNLSAPVVAVASSATTIYVTDSHAMLQLPTADNDIWREVPGLLGTRAAPVVAY.

The signal sequence occupies residues 1-23; it reads MSKISTKLKALSAVLSVTTLVAG. Residue cysteine 24 is the site of N-palmitoyl cysteine attachment. Cysteine 24 is lipidated: S-diacylglycerol cysteine.

It belongs to the LpqB lipoprotein family.

Its subcellular location is the cell membrane. This chain is Lipoprotein LpqB, found in Corynebacterium glutamicum (strain R).